The primary structure comprises 84 residues: Cryptic plasmid protein A (84 aa).

The chain is Cryptic plasmid protein A (cppA) from Neisseria gonorrhoeae.